We begin with the raw amino-acid sequence, 633 residues long: Threonine--tRNA ligase (633 aa).

The TGS domain occupies 1–61 (MINVYFSDNS…TEDCKFEVIT (61 aa)). The tract at residues 242–533 (DHRKIGKELE…LIEHHSGKLP (292 aa)) is catalytic. C333, H384, and H510 together coordinate Zn(2+).

The protein belongs to the class-II aminoacyl-tRNA synthetase family. As to quaternary structure, homodimer. The cofactor is Zn(2+).

The protein resides in the cytoplasm. It catalyses the reaction tRNA(Thr) + L-threonine + ATP = L-threonyl-tRNA(Thr) + AMP + diphosphate + H(+). Its function is as follows. Catalyzes the attachment of threonine to tRNA(Thr) in a two-step reaction: L-threonine is first activated by ATP to form Thr-AMP and then transferred to the acceptor end of tRNA(Thr). Also edits incorrectly charged L-seryl-tRNA(Thr). In Ehrlichia ruminantium (strain Welgevonden), this protein is Threonine--tRNA ligase.